Reading from the N-terminus, the 384-residue chain is Farnesyl pyrophosphate synthase 1, mitochondrial (384 aa).

Residues K89, R92, and Q128 each coordinate isopentenyl diphosphate. Residues D135 and D139 each coordinate Mg(2+). R144 contributes to the dimethylallyl diphosphate binding site. Isopentenyl diphosphate is bound at residue R145. The dimethylallyl diphosphate site is built by K232, T233, Q271, K288, and K297.

Belongs to the FPP/GGPP synthase family. It depends on Mg(2+) as a cofactor. The FPS1L mRNA accumulates preferentially in inflorescences, whereas the FPS1S mRNA is predominantly expressed in roots and inflorescences.

It is found in the mitochondrion. The protein localises to the cytoplasm. The enzyme catalyses isopentenyl diphosphate + dimethylallyl diphosphate = (2E)-geranyl diphosphate + diphosphate. It catalyses the reaction isopentenyl diphosphate + (2E)-geranyl diphosphate = (2E,6E)-farnesyl diphosphate + diphosphate. It participates in isoprenoid biosynthesis; farnesyl diphosphate biosynthesis; farnesyl diphosphate from geranyl diphosphate and isopentenyl diphosphate: step 1/1. It functions in the pathway isoprenoid biosynthesis; geranyl diphosphate biosynthesis; geranyl diphosphate from dimethylallyl diphosphate and isopentenyl diphosphate: step 1/1. In terms of biological role, catalyzes the sequential condensation of isopentenyl pyrophosphate with the allylic pyrophosphates, dimethylallyl pyrophosphate, and then with the resultant geranylpyrophosphate to the ultimate product farnesyl pyrophosphate. In Arabidopsis thaliana (Mouse-ear cress), this protein is Farnesyl pyrophosphate synthase 1, mitochondrial (FPS1).